An 885-amino-acid polypeptide reads, in one-letter code: Lon protease homolog 2, peroxisomal (885 aa).

One can recognise a Lon N-terminal domain in the interval 12–256 (LAVLPFRNKV…KATELVDRHL (245 aa)). The interval 70–104 (LLSPGVGSDSGEGGSKVGGSAVESSKQDTKNGKEP) is disordered. Residues 77–86 (SDSGEGGSKV) show a composition bias toward gly residues. A compositionally biased stretch (basic and acidic residues) spans 94–104 (SKQDTKNGKEP). Residue 409–416 (GPPGVGKT) coordinates ATP. The Lon proteolytic domain maps to 690 to 875 (VASPGVSVGL…EEVLDHAFEG (186 aa)). Catalysis depends on residues serine 781 and lysine 824. Positions 883 to 885 (SKL) match the Microbody targeting signal motif.

The protein belongs to the peptidase S16 family.

It localises to the peroxisome matrix. The enzyme catalyses Hydrolysis of proteins in presence of ATP.. ATP-dependent serine protease that mediates the selective degradation of misfolded and unassembled polypeptides in the peroxisomal matrix. Necessary for type 2 peroxisome targeting signal (PTS2)-containing protein processing and facilitates peroxisome matrix protein import. The protein is Lon protease homolog 2, peroxisomal (LON1) of Zea mays (Maize).